We begin with the raw amino-acid sequence, 84 residues long: FMRFamide-like neuropeptides 26 (84 aa).

Residues M1–A19 form the signal peptide. Positions F20–Y48 are excised as a propeptide. F61 and F82 each carry phenylalanine amide.

This sequence belongs to the FARP (FMRFamide related peptide) family. As to expression, each flp gene is expressed in a distinct set of neurons.

The protein resides in the secreted. Its function is as follows. FMRFamides and FMRFamide-like peptides are neuropeptides. This Caenorhabditis elegans protein is FMRFamide-like neuropeptides 26.